The following is a 203-amino-acid chain: GTP cyclohydrolase-2 (203 aa).

GTP is bound at residue Arg-49–Glu-53. Residues Cys-54, Cys-65, and Cys-67 each coordinate Zn(2+). GTP-binding positions include Gln-70, Glu-92–Arg-94, and Thr-114. Asp-126 functions as the Proton acceptor in the catalytic mechanism. Residue Arg-128 is the Nucleophile of the active site. The GTP site is built by Thr-149 and Lys-154.

Belongs to the GTP cyclohydrolase II family. Zn(2+) is required as a cofactor.

The catalysed reaction is GTP + 4 H2O = 2,5-diamino-6-hydroxy-4-(5-phosphoribosylamino)-pyrimidine + formate + 2 phosphate + 3 H(+). Its pathway is cofactor biosynthesis; riboflavin biosynthesis; 5-amino-6-(D-ribitylamino)uracil from GTP: step 1/4. Its function is as follows. Catalyzes the conversion of GTP to 2,5-diamino-6-ribosylamino-4(3H)-pyrimidinone 5'-phosphate (DARP), formate and pyrophosphate. This is GTP cyclohydrolase-2 from Shewanella sp. (strain MR-7).